The sequence spans 283 residues: Pantothenate synthetase (283 aa).

Methionine 34 to histidine 41 contributes to the ATP binding site. Histidine 41 (proton donor) is an active-site residue. Glutamine 65 is a binding site for (R)-pantoate. Glutamine 65 is a beta-alanine binding site. ATP is bound at residue glycine 152–aspartate 155. Glutamine 158 is a (R)-pantoate binding site. Residue methionine 189–arginine 192 coordinates ATP.

This sequence belongs to the pantothenate synthetase family. In terms of assembly, homodimer.

It localises to the cytoplasm. It carries out the reaction (R)-pantoate + beta-alanine + ATP = (R)-pantothenate + AMP + diphosphate + H(+). It functions in the pathway cofactor biosynthesis; (R)-pantothenate biosynthesis; (R)-pantothenate from (R)-pantoate and beta-alanine: step 1/1. Catalyzes the condensation of pantoate with beta-alanine in an ATP-dependent reaction via a pantoyl-adenylate intermediate. This Rhodopseudomonas palustris (strain BisA53) protein is Pantothenate synthetase.